We begin with the raw amino-acid sequence, 431 residues long: Zeaxanthin glucosyltransferase (431 aa).

This sequence belongs to the UDP-glycosyltransferase family.

The enzyme catalyses all-trans-zeaxanthin + 2 UDP-alpha-D-glucose = zeaxanthin bis(beta-D-glucoside) + 2 UDP + 2 H(+). It participates in carotenoid biosynthesis; zeaxanthin diglucoside biosynthesis. In terms of biological role, catalyzes the glycosylation reaction which converts zeaxanthin to zeaxanthin bis(beta-D-glucoside). The reaction proceeds in two steps with the monoglucoside as an intermediate. This chain is Zeaxanthin glucosyltransferase (crtX), found in Pantoea ananas (Erwinia uredovora).